Consider the following 846-residue polypeptide: Neurotactin (846 aa).

Residues 1–222 (MGELEEKETP…EDASDAPPKR (222 aa)) form a disordered region. The Cytoplasmic segment spans residues 1 to 324 (MGELEEKETP…LRGYKCSVDD (324 aa)). A compositionally biased stretch (low complexity) spans 11-20 (PTETTAAQQE). The span at 23–42 (EEPKETDKMLDKKEDAKEKT) shows a compositional bias: basic and acidic residues. Residue Thr-28 is modified to Phosphothreonine; by PKC. Residue Thr-42 is modified to Phosphothreonine. The residue at position 44 (Ser-44) is a Phosphoserine. The residue at position 47 (Thr-47) is a Phosphothreonine. Phosphoserine occurs at positions 48 and 52. Over residues 63–74 (AEKKIDDAELAK) the composition is skewed to basic and acidic residues. Residue Ser-75 is modified to Phosphoserine; by PKC. At Ser-77 the chain carries Phosphoserine. Composition is skewed to basic and acidic residues over residues 95-111 (DSAD…EVKP), 141-155 (LLEK…KEAN), 163-178 (GKDE…ERLR), and 185-205 (PSAE…KSEA). Ser-103 carries the post-translational modification Phosphoserine; by PKC. The residue at position 169 (Ser-169) is a Phosphoserine; by PKC. Residues Ser-186 and Ser-203 each carry the phosphoserine modification. Phosphothreonine is present on Thr-206. Phosphoserine is present on Ser-256. Phosphothreonine is present on Thr-259. The residue at position 263 (Ser-263) is a Phosphoserine. Thr-269 carries the post-translational modification Phosphothreonine. The chain crosses the membrane as a helical; Signal-anchor for type II membrane protein span at residues 325-346 (ALIVFGILLFVLLLGVIGYVLT). Residues 347 to 846 (HETLTSPPLR…DIVPRYARVD (500 aa)) are Extracellular-facing. 3 N-linked (GlcNAc...) asparagine glycosylation sites follow: Asn-410, Asn-417, and Asn-428. Intrachain disulfides connect Cys-422–Cys-437 and Cys-600–Cys-605. N-linked (GlcNAc...) asparagine glycosylation is found at Asn-636, Asn-691, and Asn-720. Cys-738 and Cys-830 are disulfide-bonded.

It in the C-terminal section; belongs to the type-B carboxylesterase/lipase family. Late in embryogenesis, expression is restricted to cells of the peripheral and central nervous system undergoing proliferation and differentiation. Also expressed in larval CNS, mesoderm and imaginal disks.

It localises to the membrane. In terms of biological role, may mediate or modulate cell adhesion between embryonic cells during development. The polypeptide is Neurotactin (Nrt) (Drosophila melanogaster (Fruit fly)).